The primary structure comprises 630 residues: Kelch-like protein 14 (630 aa).

The 121-residue stretch at 33 to 153 (CDVTLTAQGQ…LYTANVTLSL (121 aa)) folds into the BTB domain. Residues 69-117 (GGGVGGQDGLGAPKDQQQQQQPQQQPPQQQQPPPQEEPGTPSSSPDDKL) are disordered. A compositionally biased stretch (low complexity) spans 84–96 (QQQQQQPQQQPPQ). Positions 212–281 (VEDVLLLNFE…PAPELVERVQ (70 aa)) constitute a BACK domain. Kelch repeat units follow at residues 325–374 (MLLL…EVEN), 375–426 (FLFV…RLDK), 427–473 (HLYV…VHNG), 475–520 (IYIS…VMND), 522–572 (LYAI…VLDD), and 574–622 (IYLV…TVIL).

As to quaternary structure, interacts with TOR1A. In terms of tissue distribution, expressed in the brain, primarily in neurons. In the cerebral cortex, mostly expressed in layers I and II (at protein level). Also observed in some neurons of the corpus striatum (at protein level). Expressed at high levels in the hippocampus, including in pyramidal cells of the CA1 and CA3 layers (at protein level). In the cerebellum, expression in Purkinje cells is higher than in granular cells (at protein level). Also detected in the medial septum, ventral pallidum, thalamus, hypothalamus, amygdala, inferior colliculi, locus caeruleus, peripyramidal nucleus, raphe nucleus, reticular formation, spinal trigeminal nucleus, and vestibular nuclei (at protein level). Low expression, if any, in glial cells (at protein level). Not observed in the corpus callosum.

Its subcellular location is the cytoplasm. The protein localises to the cytosol. The protein resides in the endoplasmic reticulum membrane. In Mus musculus (Mouse), this protein is Kelch-like protein 14 (Klhl14).